We begin with the raw amino-acid sequence, 346 residues long: Transcription initiation factor TFIID subunit 11 (346 aa).

Residues 131-329 (LDKDQTNRFE…RLYRLQSDTL (199 aa)) form the Histone-fold domain. Residues serine 236 and serine 238 each carry the phosphoserine modification.

This sequence belongs to the TAF11 family. In terms of assembly, TAF11 heterodimerizes with TAF13, but they do not seem to form a heterotetramer like TAF6/TAF9. The 1.2 MDa TFIID complex is composed of TATA binding protein (TBP) and the 14 TBP-associated factors (one copy of each TAF1, TAF2, TAF3, TAF7, TAF8, TAF11, TAF13, two copies of each TAF4, TAF5, TAF6, TAF9, TAF10, TAF12, and three copies of TAF14), ranging in size from 17 to 150 kDa.

The protein localises to the nucleus. Functionally, functions as a component of the DNA-binding general transcription factor complex TFIID. Binding of TFIID to a promoter (with or without TATA element) is the initial step in pre-initiation complex (PIC) formation. TFIID plays a key role in the regulation of gene expression by RNA polymerase II through different activities such as transcription activator interaction, core promoter recognition and selectivity, TFIIA and TFIIB interaction, chromatin modification (histone acetylation by TAF1), facilitation of DNA opening and initiation of transcription. The protein is Transcription initiation factor TFIID subunit 11 (TAF11) of Saccharomyces cerevisiae (strain ATCC 204508 / S288c) (Baker's yeast).